A 400-amino-acid chain; its full sequence is Elongation factor Tu (400 aa).

The tr-type G domain maps to 10 to 209 (KEHVNIGTIG…QVDNWIDAPL (200 aa)). The G1 stretch occupies residues 19-26 (GHVDHGKT). 19–26 (GHVDHGKT) is a binding site for GTP. Thr26 contacts Mg(2+). The interval 61–65 (GITIN) is G2. The G3 stretch occupies residues 82–85 (DCPG). Residues 82–86 (DCPGH) and 137–140 (NKVD) contribute to the GTP site. The G4 stretch occupies residues 137–140 (NKVD). A G5 region spans residues 179–181 (SAL).

Belongs to the TRAFAC class translation factor GTPase superfamily. Classic translation factor GTPase family. EF-Tu/EF-1A subfamily. As to quaternary structure, monomer.

It is found in the cytoplasm. The enzyme catalyses GTP + H2O = GDP + phosphate + H(+). Functionally, GTP hydrolase that promotes the GTP-dependent binding of aminoacyl-tRNA to the A-site of ribosomes during protein biosynthesis. This is Elongation factor Tu from Mycoplasma mobile (strain ATCC 43663 / 163K / NCTC 11711) (Mesomycoplasma mobile).